The primary structure comprises 220 residues: UPF0319 protein CKO_02102 (220 aa).

The signal sequence occupies residues 1 to 20 (MKTGIITMLFVLYLPVTAFA).

It belongs to the UPF0319 family.

The protein is UPF0319 protein CKO_02102 of Citrobacter koseri (strain ATCC BAA-895 / CDC 4225-83 / SGSC4696).